Consider the following 150-residue polypeptide: SsrA-binding protein (150 aa).

The segment at D130–R150 is disordered.

Belongs to the SmpB family.

It localises to the cytoplasm. Its function is as follows. Required for rescue of stalled ribosomes mediated by trans-translation. Binds to transfer-messenger RNA (tmRNA), required for stable association of tmRNA with ribosomes. tmRNA and SmpB together mimic tRNA shape, replacing the anticodon stem-loop with SmpB. tmRNA is encoded by the ssrA gene; the 2 termini fold to resemble tRNA(Ala) and it encodes a 'tag peptide', a short internal open reading frame. During trans-translation Ala-aminoacylated tmRNA acts like a tRNA, entering the A-site of stalled ribosomes, displacing the stalled mRNA. The ribosome then switches to translate the ORF on the tmRNA; the nascent peptide is terminated with the 'tag peptide' encoded by the tmRNA and targeted for degradation. The ribosome is freed to recommence translation, which seems to be the essential function of trans-translation. This Phocaeicola vulgatus (strain ATCC 8482 / DSM 1447 / JCM 5826 / CCUG 4940 / NBRC 14291 / NCTC 11154) (Bacteroides vulgatus) protein is SsrA-binding protein.